Reading from the N-terminus, the 612-residue chain is BTB/POZ domain-containing protein 9 (612 aa).

Residues 36-104 (GDVTFVVEKK…IYTGRATLTD (69 aa)) form the BTB domain. In terms of domain architecture, BACK spans 142 to 240 (VCMTFDVASL…SLTELLNVVR (99 aa)). The disordered stretch occupies residues 559-612 (QQSTQKEDSSEEPGTGDLSTPSQQLDPHAPRAPSASSLPPSPGPNLHSPNQQNQ). Low complexity predominate over residues 589-612 (RAPSASSLPPSPGPNLHSPNQQNQ).

In terms of tissue distribution, detected throughout the gray matter of the spinal cord including the motor neurons (at protein level). In the brain, detected in the neurons of the hippocampus and in the Purkinje cells of the cerebellum (at protein level). Also detected in the terospenial cortex, bed nucleus of the stria terminalis (BST) and the ventrolateral thalamus (VL) (at protein level).

This is BTB/POZ domain-containing protein 9 (Btbd9) from Rattus norvegicus (Rat).